Consider the following 424-residue polypeptide: Histidine--tRNA ligase (424 aa).

This sequence belongs to the class-II aminoacyl-tRNA synthetase family. As to quaternary structure, homodimer.

It localises to the cytoplasm. The catalysed reaction is tRNA(His) + L-histidine + ATP = L-histidyl-tRNA(His) + AMP + diphosphate + H(+). In Shewanella piezotolerans (strain WP3 / JCM 13877), this protein is Histidine--tRNA ligase.